Here is a 194-residue protein sequence, read N- to C-terminus: Ribosome maturation factor RimP (194 aa).

The protein belongs to the RimP family.

The protein localises to the cytoplasm. Required for maturation of 30S ribosomal subunits. The polypeptide is Ribosome maturation factor RimP (Jannaschia sp. (strain CCS1)).